Reading from the N-terminus, the 524-residue chain is Putative UDP-glucuronosyltransferase ugt-56 (524 aa).

A signal peptide spans 1–20 (MLWAFIVWLGALCIYGSAFD). N-linked (GlcNAc...) asparagine glycosylation is found at asparagine 125, asparagine 277, and asparagine 335. The chain crosses the membrane as a helical span at residues 488–508 (LIDSSIALVFMLFIFVFVNHF).

It belongs to the UDP-glycosyltransferase family.

It is found in the membrane. The enzyme catalyses glucuronate acceptor + UDP-alpha-D-glucuronate = acceptor beta-D-glucuronoside + UDP + H(+). This chain is Putative UDP-glucuronosyltransferase ugt-56 (ugt-56), found in Caenorhabditis elegans.